The following is a 1465-amino-acid chain: Protein clueless (1465 aa).

The tract at residues 1 to 87 (MALEIDAKNA…SNGHSENGDA (87 aa)) is disordered. A compositionally biased stretch (low complexity) spans 30 to 51 (HNNNNNAPAAGEKNLVNGSSAA). Residues 52–61 (TKKKGKKNRN) are compositionally biased toward basic residues. Ser-273 bears the Phosphoserine mark. The Clu domain occupies 427-669 (RAEDAFSSKL…RTFPPDVNFL (243 aa)). The segment covering 742-767 (AEKQEEPNEEQPEKTEEQPAEKEESK) has biased composition (basic and acidic residues). 2 disordered regions span residues 742 to 776 (AEKQ…TKSA) and 962 to 1021 (VSSD…SNSD). Positions 970–986 (KQPRNNSGKHNKHKAAK) are enriched in basic residues. 2 stretches are compositionally biased toward low complexity: residues 987–1003 (ASKP…ATAA) and 1010–1020 (ATTSGATSSNS). 3 TPR repeats span residues 1114-1147 (AYNF…LNNV), 1240-1273 (ALID…NLKY), and 1275-1308 (GNKA…EKET). The segment at 1428–1465 (NNNDNASETEQPKDEASAAGTPTQLTNGSEESTATVSS) is disordered. The span at 1447-1465 (GTPTQLTNGSEESTATVSS) shows a compositional bias: polar residues.

It belongs to the CLU family.

The protein resides in the cytoplasm. Its function is as follows. mRNA-binding protein involved in proper cytoplasmic distribution of mitochondria. The sequence is that of Protein clueless from Drosophila virilis (Fruit fly).